Consider the following 134-residue polypeptide: ATP synthase epsilon chain (134 aa).

Belongs to the ATPase epsilon chain family. In terms of assembly, F-type ATPases have 2 components, CF(1) - the catalytic core - and CF(0) - the membrane proton channel. CF(1) has five subunits: alpha(3), beta(3), gamma(1), delta(1), epsilon(1). CF(0) has three main subunits: a, b and c.

It is found in the cell membrane. Produces ATP from ADP in the presence of a proton gradient across the membrane. This chain is ATP synthase epsilon chain, found in Listeria monocytogenes serotype 4a (strain HCC23).